A 311-amino-acid chain; its full sequence is Bifunctional protein FolD (311 aa).

NADP(+) is bound by residues G180–S182, S209, and I250.

The protein belongs to the tetrahydrofolate dehydrogenase/cyclohydrolase family. In terms of assembly, homodimer.

The catalysed reaction is (6R)-5,10-methylene-5,6,7,8-tetrahydrofolate + NADP(+) = (6R)-5,10-methenyltetrahydrofolate + NADPH. The enzyme catalyses (6R)-5,10-methenyltetrahydrofolate + H2O = (6R)-10-formyltetrahydrofolate + H(+). It participates in one-carbon metabolism; tetrahydrofolate interconversion. Functionally, catalyzes the oxidation of 5,10-methylenetetrahydrofolate to 5,10-methenyltetrahydrofolate and then the hydrolysis of 5,10-methenyltetrahydrofolate to 10-formyltetrahydrofolate. The polypeptide is Bifunctional protein FolD (Haloquadratum walsbyi (strain DSM 16790 / HBSQ001)).